A 236-amino-acid chain; its full sequence is Peptidase E (236 aa).

Catalysis depends on charge relay system residues serine 122, aspartate 137, and histidine 159.

It belongs to the peptidase S51 family.

The protein resides in the cytoplasm. It catalyses the reaction Dipeptidase E catalyzes the hydrolysis of dipeptides Asp-|-Xaa. It does not act on peptides with N-terminal Glu, Asn or Gln, nor does it cleave isoaspartyl peptides.. Functionally, hydrolyzes dipeptides containing N-terminal aspartate residues. May play a role in allowing the cell to use peptide aspartate to spare carbon otherwise required for the synthesis of the aspartate family of amino acids. The protein is Peptidase E of Shewanella sp. (strain ANA-3).